The primary structure comprises 1012 residues: Axonemal dynein light chain domain-containing protein 1 (1012 aa).

Over residues 1–17 (MSLPKTPSTPLNSTSTS) the composition is skewed to low complexity. The disordered stretch occupies residues 1 to 34 (MSLPKTPSTPLNSTSTSESKKLKVSVAKEGTRGL). Coiled-coil stretches lie at residues 317 to 402 (QRIL…IWSS), 447 to 486 (EDLA…IVKD), and 572 to 597 (SERQ…RING). Positions 841-854 (PEIDESFKEDEEES) are enriched in acidic residues. Disordered regions lie at residues 841 to 879 (PEID…TEKE) and 963 to 1012 (LEEL…KKGH). Basic and acidic residues-rich tracts occupy residues 855-879 (KEDR…TEKE) and 963-987 (LEEL…REVK). Over residues 988–997 (EEEEQQEEEE) the composition is skewed to acidic residues.

Highly expressed in testis. Highly expressed in the round and late spermatids.

The protein localises to the cytoplasm. Its function is as follows. May be essential for spermiogenesis and male fertility probably by regulating the manchette dynamics, spermatid head shaping and sperm flagellum assembly. The chain is Axonemal dynein light chain domain-containing protein 1 from Homo sapiens (Human).